Reading from the N-terminus, the 732-residue chain is Polyribonucleotide nucleotidyltransferase (732 aa).

Residues D503 and D509 each coordinate Mg(2+). A KH domain is found at 570–629; the sequence is PRLTAIQVPVESIGLIIGKGGETIRSITEETGAEINIEDDGTVTIACSSNEGTKGAVEII. Positions 639 to 713 constitute an S1 motif domain; the sequence is GTVYIGKVRD…GKTRFALSIK (75 aa).

This sequence belongs to the polyribonucleotide nucleotidyltransferase family. Mg(2+) serves as cofactor.

It is found in the cytoplasm. It carries out the reaction RNA(n+1) + phosphate = RNA(n) + a ribonucleoside 5'-diphosphate. In terms of biological role, involved in mRNA degradation. Catalyzes the phosphorolysis of single-stranded polyribonucleotides processively in the 3'- to 5'-direction. The protein is Polyribonucleotide nucleotidyltransferase of Chlorobium phaeovibrioides (strain DSM 265 / 1930) (Prosthecochloris vibrioformis (strain DSM 265)).